A 501-amino-acid chain; its full sequence is Beta-secretase 1 (501 aa).

A signal peptide spans 1-21 (MAQALPWLLLWMGAGVLPAHG). Positions 22-45 (TQHGIRLPLRSGLGGAPLGLRLPR) are excised as a propeptide. Residues 22–457 (TQHGIRLPLR…PQTDESTLMT (436 aa)) lie on the Extracellular side of the membrane. Residues 39-58 (LGLRLPRETDEEPEEPGRRG) are disordered. Residues 75 to 416 (YYVEMTVGSP…DRARKRIGFA (342 aa)) form the Peptidase A1 domain. The active site involves Asp93. At Lys126 the chain carries N6-acetyllysine. Residues Asn153, Asn172, and Asn223 are each glycosylated (N-linked (GlcNAc...) asparagine). 3 cysteine pairs are disulfide-bonded: Cys216–Cys420, Cys278–Cys443, and Cys330–Cys380. N6-acetyllysine is present on residues Lys275, Lys279, and Lys285. Asp289 is a catalytic residue. N6-acetyllysine is present on residues Lys299, Lys300, and Lys307. An N-linked (GlcNAc...) asparagine glycan is attached at Asn354. Residues 458–478 (IAYVMAAICALFMLPLCLMVC) traverse the membrane as a helical segment. Residues Cys474, Cys478, Cys482, and Cys485 are each lipidated (S-palmitoyl cysteine). Topologically, residues 479–501 (QWRCLRCLRQQHDDFADDISLLK) are cytoplasmic. Positions 479–501 (QWRCLRCLRQQHDDFADDISLLK) are interaction with RTN3. A DXXLL motif is present at residues 496–500 (DISLL). Phosphoserine is present on Ser498. Residue Lys501 forms a Glycyl lysine isopeptide (Lys-Gly) (interchain with G-Cter in ubiquitin) linkage.

It belongs to the peptidase A1 family. Monomer. Interacts (via DXXLL motif) with GGA1, GGA2 and GGA3 (via their VHS domain); the interaction highly increases when BACE1 is phosphorylated at Ser-498. Interacts with RTN1; RTN2; RTN3 and RTN4; the interaction leads to inhibition of amyloid precursor protein processing. Interacts with SNX6. Interacts with PCSK9. Interacts with NAT8 and NAT8B. Interacts with BIN1. Interacts (via extracellular domain) with ADAM10 (via extracellular domain). Interacts with SORL1; this interaction may affect binding with APP and hence reduce APP cleavage. Interacts with NRDC AND NRG1. Post-translationally, N-Glycosylated. Addition of a bisecting N-acetylglucosamine by MGAT3 blocks lysosomal targeting, further degradation and is required for maintaining stability under stress conditions. In terms of processing, acetylated in the endoplasmic reticulum at Lys-126, Lys-275, Lys-279, Lys-285, Lys-299, Lys-300 and Lys-307. Acetylation by NAT8 and NAT8B is transient and deacetylation probably occurs in the Golgi. Acetylation regulates the maturation, the transport to the plasma membrane, the stability and the expression of the protein. Palmitoylation mediates lipid raft localization. Post-translationally, ubiquitinated at Lys-501, ubiquitination leads to lysosomal degradation. Monoubiquitinated and 'Lys-63'-linked polyubitinated. Deubiquitnated by USP8; inhibits lysosomal degradation. In terms of processing, phosphorylation at Ser-498 is required for interaction with GGA1 and retrograded transport from endosomal compartments to the trans-Golgi network. Non-phosphorylated BACE1 enters a direct recycling route to the cell surface. In terms of tissue distribution, expressed at high levels in the brain and pancreas. In the brain, expression is highest in the substantia nigra, locus coruleus and medulla oblongata.

The protein resides in the cell membrane. The protein localises to the golgi apparatus. It is found in the trans-Golgi network. Its subcellular location is the endoplasmic reticulum. It localises to the endosome. The protein resides in the cell surface. The protein localises to the cytoplasmic vesicle membrane. It is found in the membrane raft. Its subcellular location is the lysosome. It localises to the late endosome. The protein resides in the early endosome. The protein localises to the recycling endosome. It is found in the cell projection. Its subcellular location is the axon. It localises to the dendrite. The enzyme catalyses Broad endopeptidase specificity. Cleaves Glu-Val-Asn-Leu-|-Asp-Ala-Glu-Phe in the Swedish variant of Alzheimer's amyloid precursor protein.. Its activity is regulated as follows. Inhibited by RTN3 and RTN4. Functionally, responsible for the proteolytic processing of the amyloid precursor protein (APP). Cleaves at the N-terminus of the A-beta peptide sequence, between residues 671 and 672 of APP, leads to the generation and extracellular release of beta-cleaved soluble APP, and a corresponding cell-associated C-terminal fragment which is later released by gamma-secretase. Cleaves CHL1. In Homo sapiens (Human), this protein is Beta-secretase 1.